The sequence spans 156 residues: 3-dehydroquinate dehydratase 1 (156 aa).

Tyr32 serves as the catalytic Proton acceptor. 3 residues coordinate substrate: Asn84, His90, and Asp97. The Proton donor role is filled by His110. Substrate contacts are provided by residues 111–112 (LS) and Arg121.

Belongs to the type-II 3-dehydroquinase family. In terms of assembly, homododecamer.

It catalyses the reaction 3-dehydroquinate = 3-dehydroshikimate + H2O. The protein operates within metabolic intermediate biosynthesis; chorismate biosynthesis; chorismate from D-erythrose 4-phosphate and phosphoenolpyruvate: step 3/7. In terms of biological role, catalyzes a trans-dehydration via an enolate intermediate. In Ralstonia nicotianae (strain ATCC BAA-1114 / GMI1000) (Ralstonia solanacearum), this protein is 3-dehydroquinate dehydratase 1 (aroQ1).